A 165-amino-acid chain; its full sequence is UPF0303 protein Bphyt_1734 (165 aa).

The protein belongs to the UPF0303 family.

The polypeptide is UPF0303 protein Bphyt_1734 (Paraburkholderia phytofirmans (strain DSM 17436 / LMG 22146 / PsJN) (Burkholderia phytofirmans)).